The chain runs to 623 residues: Interleukin-27 receptor subunit alpha (623 aa).

The first 24 residues, 1 to 24 (MNRLRVARLTPLELLLSLMSLLLG), serve as a signal peptide directing secretion. The Extracellular portion of the chain corresponds to 25 to 510 (TRPHGSPGPL…HLPDNRIRWK (486 aa)). Fibronectin type-III domains lie at 30–124 (SPGP…MKPD) and 125–225 (TPQI…TPFL). A glycan (N-linked (GlcNAc...) asparagine) is linked at asparagine 46. The WSXWS motif motif lies at 211-215 (WGEWS). N-linked (GlcNAc...) asparagine glycosylation is found at asparagine 296, asparagine 305, asparagine 360, asparagine 368, and asparagine 461. Fibronectin type-III domains lie at 316–412 (APCD…VPLA) and 413–505 (GPAV…LPDN). A helical transmembrane segment spans residues 511–531 (ALPWFLSLWGLLLMGCGLSLA). Over 532 to 623 (STRCLQARCL…PTPEELGLLV (92 aa)) the chain is Cytoplasmic. The short motif at 552–560 (IWERVPDPA) is the Box 1 motif element.

This sequence belongs to the type I cytokine receptor family. Type 2 subfamily. As to expression, expressed in CD4+ and CD8+ T-cells, B-cells, natural killer cells and macrophages. Highest levels in CD4+ T-cells and natural killer cells. Expression highest in Th0 cells.

It is found in the membrane. In terms of biological role, receptor for IL27. Requires IL6ST/GP130 to mediate signal transduction in response to IL27. This signaling system acts through STAT3 and STAT1. Involved in the regulation of Th1-type immune responses. Also appears to be involved in innate defense mechanisms. The protein is Interleukin-27 receptor subunit alpha (Il27ra) of Mus musculus (Mouse).